Reading from the N-terminus, the 267-residue chain is Tryptophan synthase alpha chain (267 aa).

Catalysis depends on proton acceptor residues E47 and D58.

The protein belongs to the TrpA family. In terms of assembly, tetramer of two alpha and two beta chains.

It carries out the reaction (1S,2R)-1-C-(indol-3-yl)glycerol 3-phosphate + L-serine = D-glyceraldehyde 3-phosphate + L-tryptophan + H2O. Its pathway is amino-acid biosynthesis; L-tryptophan biosynthesis; L-tryptophan from chorismate: step 5/5. In terms of biological role, the alpha subunit is responsible for the aldol cleavage of indoleglycerol phosphate to indole and glyceraldehyde 3-phosphate. The chain is Tryptophan synthase alpha chain from Chlorobium chlorochromatii (strain CaD3).